The chain runs to 388 residues: MAQTGITAPKGFVASATTAGIKPSGKPDMALVVNQGPEYTAAAVFTRNRVIASPVKVSRENVADGQLKAVLYNAGNANACNGTQGDADARESVNTLATKLGLAPEDIGVCSTGLIGELLPMDKVTAGIEALTAEGALGDNGAAAAQAIMTTDTVDKETVVFADGWTVGAMGKGVGMMAPSLATMLVCLTTDASITPAMARIALAKATAVTFETLDIDGSTSTNDTVFLLASGASGVKPTQDELNDAVFAACSDLAEQMQADAEGVTKRVSVTVTGTTTDEMAINAARTIARDNLFKCAMFGSDPNWGRVLAAVGMADADMDPDHIAVYFNDQAVCLDSTGAPGAREVDLSGADIAVRVDLGAGGEGQATVRTTDLSYSYVEINSAYST.

Residues Thr-150, Lys-172, Thr-183, Glu-263, Asn-383, and Thr-388 each contribute to the substrate site. The active-site Nucleophile is the Thr-183.

Belongs to the ArgJ family. In terms of assembly, heterotetramer of two alpha and two beta chains.

The protein localises to the cytoplasm. The enzyme catalyses N(2)-acetyl-L-ornithine + L-glutamate = N-acetyl-L-glutamate + L-ornithine. It carries out the reaction L-glutamate + acetyl-CoA = N-acetyl-L-glutamate + CoA + H(+). It functions in the pathway amino-acid biosynthesis; L-arginine biosynthesis; L-ornithine and N-acetyl-L-glutamate from L-glutamate and N(2)-acetyl-L-ornithine (cyclic): step 1/1. The protein operates within amino-acid biosynthesis; L-arginine biosynthesis; N(2)-acetyl-L-ornithine from L-glutamate: step 1/4. Its function is as follows. Catalyzes two activities which are involved in the cyclic version of arginine biosynthesis: the synthesis of N-acetylglutamate from glutamate and acetyl-CoA as the acetyl donor, and of ornithine by transacetylation between N(2)-acetylornithine and glutamate. This Corynebacterium efficiens (strain DSM 44549 / YS-314 / AJ 12310 / JCM 11189 / NBRC 100395) protein is Arginine biosynthesis bifunctional protein ArgJ.